A 487-amino-acid polypeptide reads, in one-letter code: NGFI-A-binding protein 1 (487 aa).

The segment at 4-82 is NCD1; it reads ALPRTLGELQ…RDWVTNPGLF (79 aa). Glycyl lysine isopeptide (Lys-Gly) (interchain with G-Cter in SUMO2) cross-links involve residues lysine 126, lysine 129, and lysine 143. Positions 162–188 are disordered; that stretch reads QGHHATESEHSLSPADLGSPASPKESS. Phosphoserine occurs at positions 172 and 183. Lysine 212 participates in a covalent cross-link: Glycyl lysine isopeptide (Lys-Gly) (interchain with G-Cter in SUMO2). The NCD2 stretch occupies residues 221 to 310; sequence LLKTNKKLAK…ARQISREVTY (90 aa). The necessary for nuclear localization stretch occupies residues 307–338; it reads EVTYKYTYRTTKSKCGERDELSPKRIKVEDGF. At serine 328 the chain carries Phosphoserine. Lysine 333 participates in a covalent cross-link: Glycyl lysine isopeptide (Lys-Gly) (interchain with G-Cter in SUMO1); alternate. Lysine 333 participates in a covalent cross-link: Glycyl lysine isopeptide (Lys-Gly) (interchain with G-Cter in SUMO2); alternate. Residues lysine 355, lysine 369, and lysine 373 each participate in a glycyl lysine isopeptide (Lys-Gly) (interchain with G-Cter in SUMO2) cross-link. The tract at residues 399 to 434 is disordered; sequence YRQSSEEHSPNGLTSDNSDGQGERPLNLRMPNLQNR. At serine 407 the chain carries Phosphoserine. Over residues 409-418 the composition is skewed to polar residues; sequence NGLTSDNSDG. Glycyl lysine isopeptide (Lys-Gly) (interchain with G-Cter in SUMO2) cross-links involve residues lysine 454, lysine 465, and lysine 477. Lysine 480 participates in a covalent cross-link: Glycyl lysine isopeptide (Lys-Gly) (interchain with G-Cter in SUMO1); alternate. Lysine 480 is covalently cross-linked (Glycyl lysine isopeptide (Lys-Gly) (interchain with G-Cter in SUMO2); alternate).

It belongs to the NAB family. In terms of assembly, homomultimers may associate with EGR1 bound to DNA. In terms of tissue distribution, isoform Short is found in myeloid leukemia cell line KG-1.

The protein localises to the nucleus. In terms of biological role, acts as a transcriptional repressor for zinc finger transcription factors EGR1 and EGR2. This is NGFI-A-binding protein 1 (NAB1) from Homo sapiens (Human).